The sequence spans 132 residues: Glycine cleavage system H protein (132 aa).

The Lipoyl-binding domain maps to arginine 24–glutamate 106. Lysine 65 bears the N6-lipoyllysine mark.

This sequence belongs to the GcvH family. The glycine cleavage system is composed of four proteins: P, T, L and H. (R)-lipoate serves as cofactor.

Its function is as follows. The glycine cleavage system catalyzes the degradation of glycine. The H protein shuttles the methylamine group of glycine from the P protein to the T protein. In Nocardia farcinica (strain IFM 10152), this protein is Glycine cleavage system H protein.